The following is a 95-amino-acid chain: Glutaredoxin 1 (95 aa).

The Glutaredoxin domain occupies Met-1 to Asn-95. Cys-17 and Cys-20 are disulfide-bonded.

It belongs to the glutaredoxin family. In terms of assembly, monomer.

The protein resides in the cytoplasm. In terms of biological role, has a glutathione-disulfide oxidoreductase activity in the presence of NADPH and glutathione reductase. Reduces low molecular weight disulfides and proteins. The chain is Glutaredoxin 1 (grxC1) from Rickettsia prowazekii (strain Madrid E).